A 453-amino-acid polypeptide reads, in one-letter code: GTPase Der (453 aa).

EngA-type G domains follow at residues 4–169 (PVVA…PPTD) and 178–353 (INVA…EQHR). Residues 10-17 (GRPNVGKS), 57-61 (DTGGL), 120-123 (NKCE), 184-191 (GRPNVGKS), 231-235 (DTAGI), and 296-299 (NKWD) each bind GTP. Residues 354–439 (RRVSTSVINE…PIRLLWRGKK (86 aa)) form the KH-like domain.

The protein belongs to the TRAFAC class TrmE-Era-EngA-EngB-Septin-like GTPase superfamily. EngA (Der) GTPase family. In terms of assembly, associates with the 50S ribosomal subunit.

GTPase that plays an essential role in the late steps of ribosome biogenesis. The chain is GTPase Der from Cyanothece sp. (strain PCC 7425 / ATCC 29141).